The primary structure comprises 802 residues: Cullin-4 (802 aa).

Composition is skewed to low complexity over residues 1-33 (MNFN…NNNN) and 656-676 (STSS…ASGS). Disordered stretches follow at residues 1-43 (MNFN…SLAG) and 656-686 (STSS…GGAT). Residues 734–794 (DRQYQVDAAI…KEYLCRDPEN (61 aa)) form the Cullin neddylation domain. Residue K748 forms a Glycyl lysine isopeptide (Lys-Gly) (interchain with G-Cter in NEDD8) linkage.

This sequence belongs to the cullin family. Neddylated. Deneddylated via its interaction with the COP9 signalosome (CSN) complex.

The protein operates within protein modification; protein ubiquitination. Probable core component of cullin-based SCF-like E3 ubiquitin-protein ligase complexes which mediate the ubiquitination and subsequent proteasomal degradation of target proteins. The E3 ubiquitin-protein ligase activity of the complex is dependent on the neddylation of the cullin subunit. The polypeptide is Cullin-4 (culD) (Dictyostelium discoideum (Social amoeba)).